Consider the following 59-residue polypeptide: MEMTDPLRREEKKESSPDPKEESGPSRPDVSRPGRDSLLKRMKKVDPKQSEKYKQRTGQ.

A disordered region spans residues 1–59; that stretch reads MEMTDPLRREEKKESSPDPKEESGPSRPDVSRPGRDSLLKRMKKVDPKQSEKYKQRTGQ. Gln59 bears the Deamidated glutamine mark. Gln59 is covalently cross-linked (Isoglutamyl lysine isopeptide (Gln-Lys) (interchain with K-? in acceptor proteins)).

The protein belongs to the ubiquitin-like protein UBact family. In terms of processing, may be modified by deamidation of its C-terminal glutamine to glutamate by the adjacently encoded deamidase. This could be a prerequisite to the subsequent conjugation, as shown in the other prokaryotic ubiquitin-like protein Pup.

In terms of biological role, may function as a protein modifier covalently attached to lysine residues of substrate proteins. This may serve to target the modified proteins for degradation by proteasomes. The sequence is that of Prokaryotic ubiquitin-like protein UBact from Nitrospina gracilis (strain 3/211).